Consider the following 60-residue polypeptide: Large ribosomal subunit protein uL30 (60 aa).

Belongs to the universal ribosomal protein uL30 family. As to quaternary structure, part of the 50S ribosomal subunit.

This chain is Large ribosomal subunit protein uL30, found in Dehalococcoides mccartyi (strain ATCC BAA-2100 / JCM 16839 / KCTC 5957 / BAV1).